Here is a 209-residue protein sequence, read N- to C-terminus: Pyridoxine/pyridoxamine 5'-phosphate oxidase (209 aa).

Residues 57–62 (RMVLLK), 72–73 (YT), lysine 79, and glutamine 101 each bind FMN. Lysine 62 is a binding site for substrate. Residues tyrosine 119, arginine 123, and serine 127 each contribute to the substrate site. FMN-binding positions include 136-137 (QS) and tryptophan 181. Residue 187–189 (RLH) coordinates substrate. Arginine 191 lines the FMN pocket.

Belongs to the pyridoxamine 5'-phosphate oxidase family. In terms of assembly, homodimer. FMN is required as a cofactor.

It catalyses the reaction pyridoxamine 5'-phosphate + O2 + H2O = pyridoxal 5'-phosphate + H2O2 + NH4(+). The enzyme catalyses pyridoxine 5'-phosphate + O2 = pyridoxal 5'-phosphate + H2O2. It participates in cofactor metabolism; pyridoxal 5'-phosphate salvage; pyridoxal 5'-phosphate from pyridoxamine 5'-phosphate: step 1/1. Its pathway is cofactor metabolism; pyridoxal 5'-phosphate salvage; pyridoxal 5'-phosphate from pyridoxine 5'-phosphate: step 1/1. In terms of biological role, catalyzes the oxidation of either pyridoxine 5'-phosphate (PNP) or pyridoxamine 5'-phosphate (PMP) into pyridoxal 5'-phosphate (PLP). The chain is Pyridoxine/pyridoxamine 5'-phosphate oxidase from Chelativorans sp. (strain BNC1).